A 615-amino-acid chain; its full sequence is Coagulation factor XII (615 aa).

The first 19 residues, 1–19 (MRALLLLGFLLVSLESTLS), serve as a signal peptide directing secretion. One can recognise a Fibronectin type-II domain in the interval 42 to 90 (VTGEPCHFPFQYHRQLYHKCTHKGRPGPQPWCATTPNFDQDQRWGYCLE). 13 disulfides stabilise this stretch: Cys-47–Cys-73, Cys-61–Cys-88, Cys-98–Cys-110, Cys-104–Cys-119, Cys-121–Cys-130, Cys-135–Cys-163, Cys-161–Cys-170, Cys-178–Cys-189, Cys-183–Cys-198, Cys-200–Cys-209, Cys-217–Cys-295, Cys-238–Cys-277, and Cys-266–Cys-290. Positions 94–131 (VKDHCSKHSPCQKGGTCVNMPSGPHCLCPQHLTGNHCQ) constitute an EGF-like 1 domain. A glycan (O-linked (Fuc) threonine) is linked at Thr-109. In terms of domain architecture, Fibronectin type-I spans 133 to 173 (EKCFEPQLLRFFHKNEIWYRTEQAAVARCQCKGPDAHCQRL). The EGF-like 2 domain maps to 174-210 (ASQACRTNPCLHGGRCLEVEGHRLCHCPVGYTGAFCD). The region spanning 217 to 295 (CYDGRGLSYR…SWEYCDLAQC (79 aa)) is the Kringle domain. N-linked (GlcNAc...) asparagine glycosylation occurs at Asn-249. The tract at residues 298–359 (PTQAAPPTPV…SLTRNGPLSC (62 aa)) is disordered. Residues Thr-299 and Thr-305 are each glycosylated (O-linked (GalNAc...) threonine). An O-linked (GalNAc...) serine glycan is attached at Ser-308. Over residues 317–326 (PAQPAPPKPQ) the composition is skewed to pro residues. Over residues 327–338 (PTTRTPPQSQTP) the composition is skewed to low complexity. 3 O-linked (GalNAc...) threonine glycosylation sites follow: Thr-328, Thr-329, and Thr-337. Disulfide bonds link Cys-359–Cys-486, Cys-397–Cys-413, Cys-405–Cys-475, Cys-436–Cys-439, Cys-500–Cys-569, Cys-532–Cys-548, and Cys-559–Cys-590. The Peptidase S1 domain occupies 373–614 (VVGGLVALRG…YLAWIREHTV (242 aa)). His-412 serves as the catalytic Charge relay system. A glycan (N-linked (GlcNAc...) asparagine) is linked at Asn-433. Asp-461 serves as the catalytic Charge relay system. Residue Ser-563 is the Charge relay system of the active site.

Belongs to the peptidase S1 family. Interacts with HRG; the interaction, which is enhanced in the presence of zinc ions and inhibited by heparin-binding, inhibits factor XII autoactivation and contact-initiated coagulation. Interacts (inactive and activated) with D7L2, an anticoagulant protein from Anopheles gambiae. Interacts (activated) with iripin-8, a serine protease inhibitor from Ixodes ricinus saliva. Interacts (inactive and activated) (via amino acids 1-77) with triafestin-1 and triafestin-2, anticoagulant proteins from Triatoma infestans. Interacts (inactive and activated) (via amino acids 1-77) with short form salivary protein D7R1, an anticoagulant protein from Anopheles stephensi. Interacts (inactive and activated) (via fibronectin type II domain) with haemaphysalin, an anticoagulant protein from Haemaphysalis longicornis. In terms of processing, factor XII is activated by kallikrein in alpha-factor XIIa, which is further converted by trypsin into beta-factor XIIa. Alpha-factor XIIa is composed of an NH2-terminal heavy chain, called coagulation factor XIIa heavy chain, and a COOH-terminal light chain, called coagulation factor XIIa light chain, connected by a disulfide bond. Beta-factor XIIa is composed of 2 chains linked by a disulfide bond, an N-terminal nonapeptide, called beta-factor XIIa part 1, and coagulation factor XIIa light chain, also known in this context as beta-factor XIIa part 2. Post-translationally, O- and N-glycosylated. The O-linked polysaccharides were not identified, but are probably the mucin type linked to GalNAc.

It is found in the secreted. The enzyme catalyses Selective cleavage of Arg-|-Ile bonds in factor VII to form factor VIIa and factor XI to form factor XIa.. With respect to regulation, activity is promoted in the presence of negatively charged surfaces. In terms of biological role, factor XII is a serum glycoprotein that participates in the initiation of blood coagulation, fibrinolysis, and the generation of bradykinin and angiotensin. Prekallikrein is cleaved by factor XII to form kallikrein, which then cleaves factor XII first to alpha-factor XIIa and then trypsin cleaves it to beta-factor XIIa. Alpha-factor XIIa activates factor XI to factor XIa. The sequence is that of Coagulation factor XII (F12) from Homo sapiens (Human).